Consider the following 281-residue polypeptide: NADH--cytochrome b5 reductase 1 (281 aa).

The chain crosses the membrane as a helical span at residues 13–33 (ILLGVFVAFVAVGAGAAYFLT). An AKR2A-binding sequence (ABS) required for mitochondrion outer membrane targeting motif is present at residues 34 to 40 (SSKKRRV). The 105-residue stretch at 45 to 149 (ENFKEFKLVK…KGPKGRFKYQ (105 aa)) folds into the FAD-binding FR-type domain. Residues 129 to 144 (REMR…GPKG) and 155 to 187 (AFGM…KVHL) each bind FAD. Thr-166 is subject to Phosphothreonine.

The protein belongs to the flavoprotein pyridine nucleotide cytochrome reductase family. Monomer. Interacts with AKR2A. The cofactor is FAD. In terms of tissue distribution, expressed in roots, stems, flowers and siliques. Detected in leaves.

It is found in the mitochondrion outer membrane. The enzyme catalyses 2 Fe(III)-[cytochrome b5] + NADH = 2 Fe(II)-[cytochrome b5] + NAD(+) + H(+). Functionally, reductase transferring electrons from NADH to cytochrome b5. Required for the NADH-dependent electron transfer involved in the desaturation and hydroxylation of fatty acids and in the desaturation of sterol precursors. No activity with NADPH as electron donor. This Arabidopsis thaliana (Mouse-ear cress) protein is NADH--cytochrome b5 reductase 1.